The following is a 309-amino-acid chain: Ornithine carbamoyltransferase (309 aa).

Carbamoyl phosphate-binding positions include 56–59 (STRT), Q83, R107, and 134–137 (HPCQ). Residues N165, D223, and 227-228 (SM) contribute to the L-ornithine site. Carbamoyl phosphate contacts are provided by residues 263-264 (CL) and R291.

This sequence belongs to the aspartate/ornithine carbamoyltransferase superfamily. OTCase family.

The protein localises to the cytoplasm. It carries out the reaction carbamoyl phosphate + L-ornithine = L-citrulline + phosphate + H(+). Its pathway is amino-acid biosynthesis; L-arginine biosynthesis; L-arginine from L-ornithine and carbamoyl phosphate: step 1/3. Functionally, reversibly catalyzes the transfer of the carbamoyl group from carbamoyl phosphate (CP) to the N(epsilon) atom of ornithine (ORN) to produce L-citrulline. The chain is Ornithine carbamoyltransferase from Burkholderia lata (strain ATCC 17760 / DSM 23089 / LMG 22485 / NCIMB 9086 / R18194 / 383).